The following is a 128-amino-acid chain: Ribonuclease P protein component (128 aa).

It belongs to the RnpA family. In terms of assembly, consists of a catalytic RNA component (M1 or rnpB) and a protein subunit.

The enzyme catalyses Endonucleolytic cleavage of RNA, removing 5'-extranucleotides from tRNA precursor.. In terms of biological role, RNaseP catalyzes the removal of the 5'-leader sequence from pre-tRNA to produce the mature 5'-terminus. It can also cleave other RNA substrates such as 4.5S RNA. The protein component plays an auxiliary but essential role in vivo by binding to the 5'-leader sequence and broadening the substrate specificity of the ribozyme. This is Ribonuclease P protein component from Rhizobium meliloti (strain 1021) (Ensifer meliloti).